The sequence spans 307 residues: Putative ankyrin repeat protein L59 (307 aa).

9 ANK repeats span residues 41–67 (LFNK…NLEK), 68–97 (IDNK…DTTN), 98–127 (HNYS…DIRA), 129–157 (DDEA…DVRN), 158–187 (RNDF…DIRT), 188–217 (DDDY…NIHA), 219–247 (GDSA…DIRI), 248–277 (DNDY…DIGA), and 279–307 (NNYA…LKLY).

This Acanthamoeba polyphaga (Amoeba) protein is Putative ankyrin repeat protein L59.